The following is a 284-amino-acid chain: MATNQSIKNNIQKKQKNVPVQQQGATMKGLLSSPSVIKRFEEVLGKRATQFTASILSLYNSEQMLQKTDPMSVISSAMVAATLDLPIDKNLGYAWIVPYGGKAQFQLGYKGYIQLALRTGQYKSINCIPIHEGELQKWNPLTEEIEIDFEKRESDAVIGYAAYFELINGFRKTVYWTKAQVEKHKKKFSKSDFGWKNDWDAMALKTVLKAVLSKWGILSVEMQKAVIEEDETRERIDITNEADSSEIIDSEPSNKDETEKPSAQETDPFDGKPVDIKDDELPFD.

The disordered stretch occupies residues 236–284 (IDITNEADSSEIIDSEPSNKDETEKPSAQETDPFDGKPVDIKDDELPFD). 2 stretches are compositionally biased toward basic and acidic residues: residues 252–262 (PSNKDETEKPS) and 269–284 (FDGKPVDIKDDELPFD).

This is an uncharacterized protein from Bacillus subtilis (strain 168).